The following is a 318-amino-acid chain: uncharacterized protein (318 aa).

This is an uncharacterized protein from Schizosaccharomyces pombe (strain 972 / ATCC 24843) (Fission yeast).